Reading from the N-terminus, the 628-residue chain is Chaperone protein HtpG (628 aa).

The tract at residues 1 to 333 (MTTDTKATET…SADLPLNVSR (333 aa)) is a; substrate-binding. Positions 334-549 (EMIQESPLLA…EHGPDRQFER (216 aa)) are b. The segment at 550–628 (LMNAAGRLDK…RLIARGIAKG (79 aa)) is c.

It belongs to the heat shock protein 90 family. Homodimer.

The protein resides in the cytoplasm. In terms of biological role, molecular chaperone. Has ATPase activity. The polypeptide is Chaperone protein HtpG (Mesorhizobium japonicum (strain LMG 29417 / CECT 9101 / MAFF 303099) (Mesorhizobium loti (strain MAFF 303099))).